Reading from the N-terminus, the 365-residue chain is BTB/POZ and TAZ domain-containing protein 1 (365 aa).

In terms of domain architecture, BTB spans 25–96; that stretch reads TDVEIITSGR…LYSPSVTENE (72 aa). The Nuclear localization signal motif lies at 193-202; the sequence is RKKRRRRHRR. A TAZ-type zinc finger spans residues 205–304; sequence NLYLQLSEAM…SESCRVPLCR (100 aa). Residues 315–338 form a caM-binding region; the sequence is KMVEDTKWKVLVRRVASAKAMSSL.

In terms of assembly, interacts with CUL3A. Interacts with GTE9/BET9 and GTE11/BET10 through the BTB domain. Preferentially expressed in young leaves, roots and stems.

The protein resides in the nucleus. Its subcellular location is the cytoplasm. The protein operates within protein modification; protein ubiquitination. In terms of biological role, may act as a substrate-specific adapter of an E3 ubiquitin-protein ligase complex (CUL3-RBX1-BTB) which mediates the ubiquitination and subsequent proteasomal degradation of target proteins. Also targeted for degradation by the 26S proteasome pathway. May be involved in gametophyte development. This Arabidopsis thaliana (Mouse-ear cress) protein is BTB/POZ and TAZ domain-containing protein 1 (BT1).